Consider the following 376-residue polypeptide: Homoserine dehydrogenase (376 aa).

Residues N17 and I18 each coordinate NADP(+). Residue I18 coordinates NAD(+). 4 residues coordinate NADPH: I18, K67, T99, and K123. NADP(+)-binding residues include T99 and K123. T99 provides a ligand contact to NAD(+). Residues E150, V153, A155, and L157 each coordinate Na(+). At S201 the chain carries Phosphoserine. G213 and E216 together coordinate NADP(+). L-homoserine contacts are provided by E216 and D227. K231 functions as the Proton donor in the catalytic mechanism. Residue G349 coordinates NADP(+). Residue G349 coordinates NAD(+). G349 contacts NADPH.

The protein belongs to the homoserine dehydrogenase family. A metal cation is required as a cofactor.

The catalysed reaction is L-homoserine + NADP(+) = L-aspartate 4-semialdehyde + NADPH + H(+). It carries out the reaction L-homoserine + NAD(+) = L-aspartate 4-semialdehyde + NADH + H(+). It functions in the pathway amino-acid biosynthesis; L-methionine biosynthesis via de novo pathway; L-homoserine from L-aspartate: step 3/3. It participates in amino-acid biosynthesis; L-threonine biosynthesis; L-threonine from L-aspartate: step 3/5. Its function is as follows. Catalyzes the conversion of L-aspartate-beta-semialdehyde (L-Asa) to L-homoserine (L-Hse), the third step in the biosynthesis of amino acids that derive from aspartate (the aspartate family of amino acids), including methioinine and threonine, the latter of which is a precursor to isoleucine; production of homoserine leads to a branch-point in the pathway as it can either be O-phosphorylated for processing to threonine, or O-acylated for processing to methionine. This chain is Homoserine dehydrogenase, found in Schizosaccharomyces pombe (strain 972 / ATCC 24843) (Fission yeast).